The chain runs to 355 residues: Na(+)/H(+) exchange regulatory cofactor NHE-RF1 (355 aa).

Ser-2 carries the N-acetylserine modification. A phosphoserine mark is found at Ser-2 and Ser-46. A PDZ 1 domain is found at 14-94; it reads LCCLEKGPNG…AVRLLVVDPE (81 aa). Composition is skewed to basic and acidic residues over residues 110-119 and 127-146; these read LLRPQEKSEQ and DTHE…RELR. Positions 110–146 are disordered; sequence LLRPQEKSEQAEPPAAADTHEAGDQNEAEKSHLRELR. Positions 149-229 constitute a PDZ 2 domain; that stretch reads LCTMKKGPNG…EAKLLVVDKE (81 aa). The disordered stretch occupies residues 244–355; it reads EHLDGPLPEP…SKKNELFSNL (112 aa). The segment covering 259-268 has biased composition (basic and acidic residues); that stretch reads IQKESSREAL. 4 positions are modified to phosphoserine: Ser-264, Ser-275, Ser-285, and Ser-286. The span at 270 to 286 shows a compositional bias: low complexity; sequence EPASESPRPALARSASS. At Thr-288 the chain carries Phosphothreonine. Residues Ser-289, Ser-294, and Ser-297 each carry the phosphoserine modification. A compositionally biased stretch (low complexity) spans 303–323; sequence STEPSSTSSSSSDPILDLNIS. The segment covering 345–355 has biased composition (basic and acidic residues); that stretch reads WSKKNELFSNL.

As to quaternary structure, homodimer, and heterodimer with NHERF2. Binds the N-termini of EZR, RDX and MSN. Binds the C-termini of PDGFRA, PDGFRB, ADRB2 and NOS2. Binds ARHGAP17, EPI64, RACK1, OPRK1, GNAQ, CTNNB1, PLCB3 and CLCN3. Forms a complex with CFTR and SLC4A7. Forms a complex with SLC4A7 and ATP6V1B1. Binds PDZK1. Binds the C-terminus of PAG1. In resting T-cells, part of a PAG1-NHERF1-MSN complex which is disrupted upon TCR activation. Directly interacts with HTR4. Interacts with MCC. Interacts with TRPC4 (via the PDZ-binding domain). Interacts (via the PDZ 1 domain) with PODXL (via the C-terminal PDZ-binding motif DTHL); interaction is not detected in glomerular epithelium cells. Interacts (via the PDZ 1 domain) with PODXL (via the C-terminal PDZ-binding motif DTHL); the interaction take place early in the secretory pathway and is necessary for its apical membrane sorting. Interacts with SLC34A1. Interacts with CFTR, SLC26A3 and SLC26A6. Interacts (via PDZ domains) with ACE2 (via PDZ-binding motif); the interaction may enhance ACE2 membrane residence. In terms of tissue distribution, expressed in spermatogenic cells.

It is found in the cytoplasm. Its subcellular location is the apical cell membrane. The protein localises to the cell projection. It localises to the filopodium. The protein resides in the ruffle. It is found in the microvillus. Its subcellular location is the endomembrane system. Functionally, scaffold protein that connects plasma membrane proteins with members of the ezrin/moesin/radixin family and thereby helps to link them to the actin cytoskeleton and to regulate their surface expression. Necessary for recycling of internalized ADRB2. Was first known to play a role in the regulation of the activity and subcellular location of SLC9A3. Necessary for cAMP-mediated phosphorylation and inhibition of SLC9A3. May enhance Wnt signaling. May participate in HTR4 targeting to microvilli. Involved in the regulation of phosphate reabsorption in the renal proximal tubules. Involved in sperm capacitation. May participate in the regulation of the chloride and bicarbonate homeostasis in spermatozoa. The polypeptide is Na(+)/H(+) exchange regulatory cofactor NHE-RF1 (Nherf1) (Mus musculus (Mouse)).